An 81-amino-acid chain; its full sequence is MRNATFFIVFYVFISLVLSNVQDVTAQKNKCMRSEMFPTGPCGNNGEETCKKDFKNIYRTPIQCKCLDKYDFARLCDCRFC.

Residues 1–26 form the signal peptide; the sequence is MRNATFFIVFYVFISLVLSNVQDVTA. Disulfide bonds link Cys-31–Cys-81, Cys-42–Cys-66, Cys-50–Cys-76, and Cys-64–Cys-78.

The protein belongs to the DEFL family. As to expression, expressed in microspores and in young and mature anthers.

It is found in the secreted. Involved in self-incompatibility. This is Defensin-like protein b (SCRb-1) from Arabidopsis lyrata (Lyre-leaved rock-cress).